We begin with the raw amino-acid sequence, 387 residues long: 3-ketoacyl-CoA thiolase (387 aa).

The Acyl-thioester intermediate role is filled by cysteine 91. Residues histidine 343 and cysteine 373 each act as proton acceptor in the active site.

This sequence belongs to the thiolase-like superfamily. Thiolase family. As to quaternary structure, heterotetramer of two alpha chains (FadB) and two beta chains (FadA).

It is found in the cytoplasm. It carries out the reaction an acyl-CoA + acetyl-CoA = a 3-oxoacyl-CoA + CoA. Its pathway is lipid metabolism; fatty acid beta-oxidation. Functionally, catalyzes the final step of fatty acid oxidation in which acetyl-CoA is released and the CoA ester of a fatty acid two carbons shorter is formed. In Cronobacter sakazakii (strain ATCC BAA-894) (Enterobacter sakazakii), this protein is 3-ketoacyl-CoA thiolase.